A 64-amino-acid chain; its full sequence is Large ribosomal subunit protein uL30 (64 aa).

A disordered region spans residues 1–22; that stretch reads MSEQVKRVRVTQVGSPIGRKPG.

The protein belongs to the universal ribosomal protein uL30 family. As to quaternary structure, part of the 50S ribosomal subunit.

This is Large ribosomal subunit protein uL30 from Acidiphilium cryptum (strain JF-5).